The chain runs to 34 residues: Trypsin inhibitor 1 (34 aa).

Positions Ser-1 to Gly-34 form a cross-link, cyclopeptide (Ser-Gly). 3 cysteine pairs are disulfide-bonded: Cys-8–Cys-25, Cys-15–Cys-27, and Cys-21–Cys-33.

In terms of processing, this is a cyclic peptide.

The protein localises to the secreted. Functionally, inhibits trypsin; probably participates in a plant defense mechanism. This Momordica cochinchinensis (Spiny bitter cucumber) protein is Trypsin inhibitor 1.